The following is a 62-amino-acid chain: UPF0291 protein CLB_2550 (62 aa).

The protein belongs to the UPF0291 family.

It is found in the cytoplasm. This Clostridium botulinum (strain ATCC 19397 / Type A) protein is UPF0291 protein CLB_2550.